We begin with the raw amino-acid sequence, 610 residues long: Menin (610 aa).

The interaction with FANCD2 stretch occupies residues 214-390 (GVAERSWLYL…SLLEAGEERP (177 aa)). The disordered stretch occupies residues 462-552 (AEAAEAEELW…SPPPEGPVLT (91 aa)). A compositionally biased stretch (basic and acidic residues) spans 484–500 (RRESKPEEPPPPKKPAL). Phosphoserine is present on residues Ser487 and Ser543. The span at 537 to 548 (APAPAASPPPEG) shows a compositional bias: pro residues. The residue at position 594 (Thr594) is a Phosphothreonine.

As to quaternary structure, component of the MLL-HCF complex, at least composed of KMT2A/MLL1, MEN1, ASH2L, RBBP5, DPY30, WDR5, HCFC1 and HCFC2. Component of the menin-associated histone methyltransferase complex, at least composed of KMT2B/MLL4, MEN1, ASH2L, RBBP5, DPY30 and WDR5. Interacts with POLR2B. Interacts with POLR2A phosphorylated at 'Ser-5', but not with the unphosphorylated, nor 'Ser-2' phosphorylated POLR2A forms. Interacts with FANCD2 and DBF4. Interacts with SMAD3, but not with SMAD2, nor SMAD4. Directly interacts with NFKB1, NFKB2 and RELA. Interacts with JUND (via MBM motif); inhibits the interaction of JUND with MAPK10 and the phosphorylation of JUND by MAP kinases MAPK8 and MAPK10. Interacts with KMT2A (via MBM motif). The KMT2A-MEN1 complex interacts with PSIP1 with a greater affinity as MEN1 enhances interaction of KMT2A with PSIP1.

Its subcellular location is the nucleus. In terms of biological role, essential component of a MLL/SET1 histone methyltransferase (HMT) complex, a complex that specifically methylates 'Lys-4' of histone H3 (H3K4). Functions as a transcriptional regulator. Binds to the TERT promoter and represses telomerase expression. Plays a role in TGFB1-mediated inhibition of cell-proliferation, possibly regulating SMAD3 transcriptional activity. Represses JUND-mediated transcriptional activation on AP1 sites, as well as that mediated by NFKB subunit RELA. Positively regulates HOXC8 and HOXC6 gene expression. May be involved in normal hematopoiesis through the activation of HOXA9 expression. May be involved in DNA repair. This Canis lupus familiaris (Dog) protein is Menin (MEN1).